We begin with the raw amino-acid sequence, 771 residues long: 5-methyltetrahydropteroyltriglutamate--homocysteine methyltransferase (771 aa).

5-methyltetrahydropteroyltri-L-glutamate-binding positions include 13-16 (RELK) and K128. L-homocysteine is bound by residues 451–453 (IGS) and E504. L-methionine is bound by residues 451-453 (IGS) and E504. 5-methyltetrahydropteroyltri-L-glutamate is bound by residues 535–536 (RC) and W581. Position 619 (D619) interacts with L-homocysteine. Position 619 (D619) interacts with L-methionine. Residue E625 coordinates 5-methyltetrahydropteroyltri-L-glutamate. Zn(2+)-binding residues include H661, C663, and E685. H714 functions as the Proton donor in the catalytic mechanism. Zn(2+) is bound at residue C746.

This sequence belongs to the vitamin-B12 independent methionine synthase family. Zn(2+) serves as cofactor.

The enzyme catalyses 5-methyltetrahydropteroyltri-L-glutamate + L-homocysteine = tetrahydropteroyltri-L-glutamate + L-methionine. It functions in the pathway amino-acid biosynthesis; L-methionine biosynthesis via de novo pathway; L-methionine from L-homocysteine (MetE route): step 1/1. Catalyzes the transfer of a methyl group from 5-methyltetrahydrofolate to homocysteine resulting in methionine formation. The chain is 5-methyltetrahydropteroyltriglutamate--homocysteine methyltransferase from Nitrobacter winogradskyi (strain ATCC 25391 / DSM 10237 / CIP 104748 / NCIMB 11846 / Nb-255).